The following is an 87-amino-acid chain: NAD(P)H-quinone oxidoreductase subunit O (87 aa).

A compositionally biased stretch (basic and acidic residues) spans 1–10; sequence MSEQTGKVDD. Residues 1 to 23 form a disordered region; the sequence is MSEQTGKVDDSQSPPKVQKKLRK.

Belongs to the complex I NdhO subunit family. NDH-1 can be composed of about 15 different subunits; different subcomplexes with different compositions have been identified which probably have different functions.

The protein resides in the cellular thylakoid membrane. The enzyme catalyses a plastoquinone + NADH + (n+1) H(+)(in) = a plastoquinol + NAD(+) + n H(+)(out). It carries out the reaction a plastoquinone + NADPH + (n+1) H(+)(in) = a plastoquinol + NADP(+) + n H(+)(out). NDH-1 shuttles electrons from an unknown electron donor, via FMN and iron-sulfur (Fe-S) centers, to quinones in the respiratory and/or the photosynthetic chain. The immediate electron acceptor for the enzyme in this species is believed to be plastoquinone. Couples the redox reaction to proton translocation, and thus conserves the redox energy in a proton gradient. Cyanobacterial NDH-1 also plays a role in inorganic carbon-concentration. The chain is NAD(P)H-quinone oxidoreductase subunit O from Prochlorococcus marinus (strain NATL2A).